The sequence spans 734 residues: Phosphoribosylformylglycinamidine synthase subunit PurL (734 aa).

Residue His46 is part of the active site. Residues Tyr49 and Lys88 each coordinate ATP. Mg(2+) is bound at residue Glu90. Residues 91-94 (SHNH) and Arg113 each bind substrate. His92 functions as the Proton acceptor in the catalytic mechanism. Asp114 serves as a coordination point for Mg(2+). Gln237 serves as a coordination point for substrate. Asp265 serves as a coordination point for Mg(2+). 309 to 311 (ESQ) contributes to the substrate binding site. Positions 489 and 526 each coordinate ATP. Asn527 provides a ligand contact to Mg(2+). A substrate-binding site is contributed by Ser529.

Belongs to the FGAMS family. Monomer. Part of the FGAM synthase complex composed of 1 PurL, 1 PurQ and 2 PurS subunits.

It is found in the cytoplasm. It carries out the reaction N(2)-formyl-N(1)-(5-phospho-beta-D-ribosyl)glycinamide + L-glutamine + ATP + H2O = 2-formamido-N(1)-(5-O-phospho-beta-D-ribosyl)acetamidine + L-glutamate + ADP + phosphate + H(+). It participates in purine metabolism; IMP biosynthesis via de novo pathway; 5-amino-1-(5-phospho-D-ribosyl)imidazole from N(2)-formyl-N(1)-(5-phospho-D-ribosyl)glycinamide: step 1/2. In terms of biological role, part of the phosphoribosylformylglycinamidine synthase complex involved in the purines biosynthetic pathway. Catalyzes the ATP-dependent conversion of formylglycinamide ribonucleotide (FGAR) and glutamine to yield formylglycinamidine ribonucleotide (FGAM) and glutamate. The FGAM synthase complex is composed of three subunits. PurQ produces an ammonia molecule by converting glutamine to glutamate. PurL transfers the ammonia molecule to FGAR to form FGAM in an ATP-dependent manner. PurS interacts with PurQ and PurL and is thought to assist in the transfer of the ammonia molecule from PurQ to PurL. This is Phosphoribosylformylglycinamidine synthase subunit PurL from Gluconobacter oxydans (strain 621H) (Gluconobacter suboxydans).